Reading from the N-terminus, the 100-residue chain is Small ribosomal subunit protein uS14c (100 aa).

It belongs to the universal ribosomal protein uS14 family. In terms of assembly, part of the 30S ribosomal subunit.

It is found in the plastid. Its subcellular location is the chloroplast. In terms of biological role, binds 16S rRNA, required for the assembly of 30S particles. In Cyanidium caldarium (Red alga), this protein is Small ribosomal subunit protein uS14c.